A 148-amino-acid polypeptide reads, in one-letter code: Natriuretic peptide BF131 (148 aa).

The signal sequence occupies residues 1–27; sequence MVGPSRLAGGGLLLLLLLALLPLALDG. Residues 28 to 83 constitute a propeptide that is removed on maturation; that stretch reads KPAPPPQALPKDPAAASAAERIMRALLPDSKSSRPATDRMVHPEHQAGGGDTRRLQ. 2 disordered regions span residues 54-83 and 105-127; these read LPDSKSSRPATDRMVHPEHQAGGGDTRRLQ and TSDMGCRHRKDPPRAPPAAPSAA. Over residues 63 to 83 the composition is skewed to basic and acidic residues; that stretch reads ATDRMVHPEHQAGGGDTRRLQ. Residues Cys-94 and Cys-110 are joined by a disulfide bond. A propeptide spanning residues 130–148 is cleaved from the precursor; it reads AVTWLIRDLRADSKQSRAA.

The protein belongs to the natriuretic peptide family. Expressed by the venom gland.

It localises to the secreted. In terms of biological role, natriuretic peptide that dose-dependently induces the rapid relaxation of rat aortic strips phenylephrine-precontracted. Acts by stimulating cGMP production in a dose-dependent manner (by probably activating NPR1 and/or NPR2). May also show potent hypotensive effects. The chain is Natriuretic peptide BF131 from Bungarus flaviceps flaviceps (Red-headed krait).